Consider the following 365-residue polypeptide: MVILGSTGSIGTNTLEICSRHGVSVEALSCAKNIALLNEQIARFRPKFVCVADESLASEVKILKKSQIFVGAGGLLEMLEACHSQKVVNAIVGFAGLAPSLKTQELGKSLALANKESLVAGGKFLDTAKISPIDSEHFGLKFLLQNRTAPNRLIITASGGAFYRTPMKNLAKVTPSDALKHPNWSMGAKITIDSATMANKLFEVMEAFWLYGTSRIDALIEPTSMVHALVEFMDGSCTAHISRADMKLAIAHAVLENVSENVVAHADLLALKDIKFHKINLKKYPIFSLKEQVLERADLGVVINAANEVGVFAFLKGECRFLDISRIVLAAAKRFADVKIETKDEIFAIDAEVRNFTKRGLNAKI.

8 residues coordinate NADPH: Thr7, Gly8, Ser9, Ile10, Ala31, Lys32, Asn33, and Asn114. Lys115 contributes to the 1-deoxy-D-xylulose 5-phosphate binding site. Glu116 is an NADPH binding site. Position 134 (Asp134) interacts with Mn(2+). Ser135, Glu136, Ser158, and His181 together coordinate 1-deoxy-D-xylulose 5-phosphate. Glu136 provides a ligand contact to Mn(2+). Gly187 contacts NADPH. 1-deoxy-D-xylulose 5-phosphate is bound by residues Ser194, Asn199, Lys200, and Glu203. Glu203 is a binding site for Mn(2+).

Belongs to the DXR family. It depends on Mg(2+) as a cofactor. The cofactor is Mn(2+).

It catalyses the reaction 2-C-methyl-D-erythritol 4-phosphate + NADP(+) = 1-deoxy-D-xylulose 5-phosphate + NADPH + H(+). The protein operates within isoprenoid biosynthesis; isopentenyl diphosphate biosynthesis via DXP pathway; isopentenyl diphosphate from 1-deoxy-D-xylulose 5-phosphate: step 1/6. Its function is as follows. Catalyzes the NADPH-dependent rearrangement and reduction of 1-deoxy-D-xylulose-5-phosphate (DXP) to 2-C-methyl-D-erythritol 4-phosphate (MEP). The sequence is that of 1-deoxy-D-xylulose 5-phosphate reductoisomerase from Campylobacter curvus (strain 525.92).